The following is a 1495-amino-acid chain: Nuclear pore complex protein NUP160 (1495 aa).

Part of the nuclear pore complex (NPC). The NPC has an eight-fold symmetrical structure comprising a central transport channel and two rings, the cytoplasmic and nuclear rings, to which eight filaments are attached. The cytoplasmic filaments have loose ends, while the nuclear filaments are joined in a distal ring, forming a nuclear basket. NPCs are highly dynamic in configuration and composition, and can be devided in 3 subcomplexes, the NUP62 subcomplex, the NUP107-160 subcomplex and the NUP93 subcomplex, containing approximately 30 different nucleoporin proteins. Expressed in roots, stems, anthers, siliques and vascular tissues of cotyledons, leaves and hypocotyls.

The protein resides in the nucleus membrane. Its subcellular location is the nucleus. It is found in the nuclear pore complex. Contributes to the transfer of mature mRNA from the nucleus to the cytosol. Required for both R gene-mediated and basal disease resistance. RNA export seems to play a critical role in stress responses and regulation of plant growth and development. Required for proper expression of factors associated with auxin signaling. This is Nuclear pore complex protein NUP160 from Arabidopsis thaliana (Mouse-ear cress).